We begin with the raw amino-acid sequence, 478 residues long: MKILFAVSEAFPFAKSGGLADVAYSLPKALRNLGVDIRVIMPKYSDIHPDFTTKMKHICHFTVPVGWRNQYCGIEYLNLDGVPFYFVDNEYYFKRPGYYGYYDDGERFSFFSRAVCEAVYHLDFDVDIIHVNDWHTSVIPVLLKAHYGHSDKHNKIKTILTIHNLKYQGIFPKEVMYDLLSLPDEYFSEDKLKFYDAISFLKGGIIYSDKVVTVSRTYANEVRTLSYGEGLHGLLSGIGEKLIGIINGIDYEVYNPATDKLIFVNYDSNTFENRKKENKFRLQQMLNLPVSDEIVLIGMVSRLTKEKGIELIERIINKLLTLPVQLVILGAGDYHYEQMLKQYAGAFPSKVSANICYSEELARKIYAGSDMYLMPSLTEPCGISQLIAMRYGSVPIVRETGGLKDTVKPYNQFTGEGWGFSFANYDPAELFATIKYALSIYNDKNQWRNIVHQAMTQDNSWNASAYEYQKVYESLLNS.

ADP-alpha-D-glucose is bound at residue lysine 15.

It belongs to the glycosyltransferase 1 family. Bacterial/plant glycogen synthase subfamily.

The catalysed reaction is [(1-&gt;4)-alpha-D-glucosyl](n) + ADP-alpha-D-glucose = [(1-&gt;4)-alpha-D-glucosyl](n+1) + ADP + H(+). The protein operates within glycan biosynthesis; glycogen biosynthesis. In terms of biological role, synthesizes alpha-1,4-glucan chains using ADP-glucose. The sequence is that of Glycogen synthase from Caldicellulosiruptor bescii (strain ATCC BAA-1888 / DSM 6725 / KCTC 15123 / Z-1320) (Anaerocellum thermophilum).